A 361-amino-acid chain; its full sequence is Serpentine receptor class X 45 (361 aa).

Transmembrane regions (helical) follow at residues 20-40 (LLIF…AFYI), 58-78 (AAGD…VLFF), 92-112 (FAQL…VISL), 133-153 (TTFL…FLVI), 176-196 (MINV…MFAI), 242-262 (LLYV…PVPL), and 278-298 (LLTT…TLIF). An N-linked (GlcNAc...) asparagine glycan is attached at Asn317.

Belongs to the G-protein coupled receptor 1 family.

Its subcellular location is the cell membrane. This Caenorhabditis elegans protein is Serpentine receptor class X 45 (srx-45).